Here is a 273-residue protein sequence, read N- to C-terminus: (5R)-carbapenem-3-carboxylate synthase (273 aa).

Residues His-101 and Asp-103 each contribute to the Fe cation site. Gly-104 is a binding site for substrate. A 2-oxoglutarate-binding site is contributed by Thr-130. Residue His-251 participates in Fe cation binding. Positions 253, 263, and 267 each coordinate 2-oxoglutarate.

This sequence belongs to the TfdA dioxygenase family. Homohexamer. Dimer of trimers. Fe(2+) serves as cofactor.

It is found in the cytoplasm. The catalysed reaction is (3S,5S)-carbapenam-3-caboxylate + 2-oxoglutarate + O2 = (5R)-carbapenem-3-carboxylate + succinate + CO2 + H2O. Its activity is regulated as follows. Inhibited by L-N-acetylproline and by D-N-acetylproline. Catalyzes the Fe(2+) and alpha-ketoglutarate-dependent conversion of (3S,5S)-carbapenam to (5R)-carbapenem, an essential step in carbapenem antibiotic biosynthesis. The sequence is that of (5R)-carbapenem-3-carboxylate synthase (carC) from Pectobacterium carotovorum subsp. carotovorum (Erwinia carotovora subsp. carotovora).